The chain runs to 472 residues: MAGPGWGPPRLDGFILTERLGSGTYATVYKAYAKKDTREVVAIKCVAKKSLNKASVENLLTEIEILKGIRHPHIVQLKDFQWDSDNIYLIMEFCAGGDLSRFIHTRRILPEKVARVFMQQLASALQFLHERNISHLDLKPQNILLSSLEKPHLKLADFGFAQHMSPWDEKHVLRGSPLYMAPEMVCQRQYDARVDLWSMGVILYEALFGQPPFASRSFSELEEKIRSNRVIELPLRPLLSRDCRDLLQRLLERDPSRRISFQDFFAHPWVDLEHMPSGESLGRATALVVQAVKKDQEGDSAAALSLYCKALDFFVPALHYEVDAQRKEAIKAKVGQYVSRAEELKAIVSSSNQALLRQGTSARDLLREMARDKPRLLAALEVASAAMAKEEAAGGEQDALDLYQHSLGELLLLLAAEPPGRRRELLHTEVQNLMARAEYLKEQVKMRESRWEADTLDKEGLSESVRSSCTLQ.

The region spanning 14–270 is the Protein kinase domain; sequence FILTERLGSG…FQDFFAHPWV (257 aa). ATP-binding positions include 20–28 and K44; that span reads LGSGTYATV. Residue D137 is the Proton acceptor of the active site. S176 is modified (phosphoserine). The region spanning 280-348 is the MIT 1 domain; the sequence is SLGRATALVV…SRAEELKAIV (69 aa). Phosphoserine; by autocatalysis is present on residues S300, S350, S384, and S464. Residues 375-444 enclose the MIT 2 domain; that stretch reads RLLAALEVAS…ARAEYLKEQV (70 aa).

Belongs to the protein kinase superfamily. Ser/Thr protein kinase family. APG1/unc-51/ULK1 subfamily. Interacts (via protein kinase domain) with SUFU. In terms of processing, autophosphorylated. Autophosphorylation is blocked by interaction with SUFU. In terms of tissue distribution, widely expressed. Highest levels observed in fetal brain. In adult tissues, high levels in brain, liver and kidney, moderate levels in testis and adrenal gland and low levels in heart, lung, stomach, thymus, prostate and placenta. In the brain, highest expression in the hippocampus, high levels also detected in the cerebellum, olfactory bulb and optic nerve. In the central nervous system, lowest levels in the spinal cord.

The protein resides in the cytoplasm. The enzyme catalyses L-seryl-[protein] + ATP = O-phospho-L-seryl-[protein] + ADP + H(+). The catalysed reaction is L-threonyl-[protein] + ATP = O-phospho-L-threonyl-[protein] + ADP + H(+). Its function is as follows. Serine/threonine protein kinase that acts as a regulator of Sonic hedgehog (SHH) signaling and autophagy. Acts as a negative regulator of SHH signaling in the absence of SHH ligand: interacts with SUFU, thereby inactivating the protein kinase activity and preventing phosphorylation of GLI proteins (GLI1, GLI2 and/or GLI3). Positively regulates SHH signaling in the presence of SHH: dissociates from SUFU, autophosphorylates and mediates phosphorylation of GLI2, activating it and promoting its nuclear translocation. Phosphorylates in vitro GLI2, as well as GLI1 and GLI3, although less efficiently. Also acts as a regulator of autophagy: following cellular senescence, able to induce autophagy. This is Serine/threonine-protein kinase ULK3 (ULK3) from Homo sapiens (Human).